The chain runs to 230 residues: Heptaprenylglyceryl phosphate synthase (230 aa).

K12 is a binding site for sn-glycerol 1-phosphate. Residues D14 and T40 each coordinate Mg(2+). Sn-glycerol 1-phosphate is bound by residues 159–164 (YIEYSG), G189, and 209–210 (GD).

The protein belongs to the GGGP/HepGP synthase family. Group I subfamily. In terms of assembly, homodimer. It depends on Mg(2+) as a cofactor.

It catalyses the reaction sn-glycerol 1-phosphate + all-trans-heptaprenyl diphosphate = 3-heptaprenyl-sn-glycero-1-phosphate + diphosphate. It participates in membrane lipid metabolism; glycerophospholipid metabolism. Prenyltransferase that catalyzes in vivo the transfer of the heptaprenyl moiety of heptaprenyl pyrophosphate (HepPP; 35 carbon atoms) to the C3 hydroxyl of sn-glycerol-1-phosphate (G1P), producing heptaprenylglyceryl phosphate (HepGP). This reaction is an ether-bond-formation step in the biosynthesis of archaea-type G1P-based membrane lipids found in Bacillales. This Staphylococcus aureus (strain USA300) protein is Heptaprenylglyceryl phosphate synthase.